A 225-amino-acid polypeptide reads, in one-letter code: Biosynthetic peptidoglycan transglycosylase (225 aa).

Residues 9 to 29 (LLIFIGAILLIQLWIFSSLVW) traverse the membrane as a helical segment.

The protein belongs to the glycosyltransferase 51 family.

It localises to the cell inner membrane. It catalyses the reaction [GlcNAc-(1-&gt;4)-Mur2Ac(oyl-L-Ala-gamma-D-Glu-L-Lys-D-Ala-D-Ala)](n)-di-trans,octa-cis-undecaprenyl diphosphate + beta-D-GlcNAc-(1-&gt;4)-Mur2Ac(oyl-L-Ala-gamma-D-Glu-L-Lys-D-Ala-D-Ala)-di-trans,octa-cis-undecaprenyl diphosphate = [GlcNAc-(1-&gt;4)-Mur2Ac(oyl-L-Ala-gamma-D-Glu-L-Lys-D-Ala-D-Ala)](n+1)-di-trans,octa-cis-undecaprenyl diphosphate + di-trans,octa-cis-undecaprenyl diphosphate + H(+). It functions in the pathway cell wall biogenesis; peptidoglycan biosynthesis. Functionally, peptidoglycan polymerase that catalyzes glycan chain elongation from lipid-linked precursors. The polypeptide is Biosynthetic peptidoglycan transglycosylase (Acinetobacter baumannii (strain SDF)).